Reading from the N-terminus, the 322-residue chain is GTP 3',8-cyclase (322 aa).

A Radical SAM core domain is found at 4 to 229; that stretch reads NFNRNIDYLR…IPVQMKKSGP (226 aa). Arg-13 lines the GTP pocket. Residues Cys-20 and Cys-24 each contribute to the [4Fe-4S] cluster site. Position 26 (Tyr-26) interacts with S-adenosyl-L-methionine. Cys-27 contributes to the [4Fe-4S] cluster binding site. Arg-64 is a GTP binding site. Gly-68 contacts S-adenosyl-L-methionine. Thr-95 is a binding site for GTP. Position 119 (Ser-119) interacts with S-adenosyl-L-methionine. Lys-156 lines the GTP pocket. An S-adenosyl-L-methionine-binding site is contributed by Met-190. Cys-253 and Cys-256 together coordinate [4Fe-4S] cluster. 258–260 serves as a coordination point for GTP; that stretch reads RLR. Residue Cys-270 coordinates [4Fe-4S] cluster.

Belongs to the radical SAM superfamily. MoaA family. As to quaternary structure, monomer and homodimer. The cofactor is [4Fe-4S] cluster.

It carries out the reaction GTP + AH2 + S-adenosyl-L-methionine = (8S)-3',8-cyclo-7,8-dihydroguanosine 5'-triphosphate + 5'-deoxyadenosine + L-methionine + A + H(+). It participates in cofactor biosynthesis; molybdopterin biosynthesis. Catalyzes the cyclization of GTP to (8S)-3',8-cyclo-7,8-dihydroguanosine 5'-triphosphate. This chain is GTP 3',8-cyclase, found in Thermodesulfovibrio yellowstonii (strain ATCC 51303 / DSM 11347 / YP87).